The sequence spans 241 residues: GLIPR1-like protein 1 (241 aa).

The first 22 residues, 1–22 (MILRKKLSYLWTLGLCLVASKS), serve as a signal peptide directing secretion. Positions 39 to 172 (LRLHNEARTN…PDSALLVCNY (134 aa)) constitute an SCP domain. Ser220 carries the GPI-anchor amidated serine lipid modification. The propeptide at 221–241 (GTRQLIACNPLYLISVLLTIF) is removed in mature form.

Belongs to the CRISP family. Part of a oolemmal binding multimeric complex (IZUMO1 complex) composed at least of IZUMO1 and GLIPR1L1; the complex assemblage is influenced by the maturation status of the male germ cell. Interacts with IZUMO1. In terms of processing, N-glycosylated. N-glycosylation decreases during the transit in the caput. As to expression, highly expressed in testis, where it localizes to round and elongating spermatids and differentiated spermatozoa in the seminiferous tubules and epididymis (at protein level).

The protein localises to the cytoplasmic vesicle. The protein resides in the secretory vesicle. It localises to the acrosome. Its subcellular location is the cell membrane. It is found in the membrane raft. Required for optimal fertilization at the stage of sperm-oocyte fusion, plays a role in optimizing acrosome function, the translocation of IZUMO1 during the acrosome reaction and the fertilization process. Component of epididymosomes, one type of membranous microvesicules which mediate the transfer of lipids and proteins to spermatozoa plasma membrane during epididymal maturation. Also a component of the CD9-positive microvesicules found in the cauda region. The protein is GLIPR1-like protein 1 of Bos taurus (Bovine).